The chain runs to 359 residues: Molybdenum import ATP-binding protein ModC (359 aa).

Residues 1 to 229 (MLELNFSQQL…SALRPWLQRE (229 aa)) form the ABC transporter domain. Position 31–38 (31–38 (GLSGAGKT)) interacts with ATP. Residues 289 to 354 (SSSIRNILPV…IKSVSFNRQN (66 aa)) form the Mop domain.

This sequence belongs to the ABC transporter superfamily. Molybdate importer (TC 3.A.1.8) family. As to quaternary structure, the complex is composed of two ATP-binding proteins (ModC), two transmembrane proteins (ModB) and a solute-binding protein (ModA).

The protein resides in the cell inner membrane. It carries out the reaction molybdate(out) + ATP + H2O = molybdate(in) + ADP + phosphate + H(+). In terms of biological role, part of the ABC transporter complex ModABC involved in molybdenum import. Responsible for energy coupling to the transport system. This is Molybdenum import ATP-binding protein ModC from Yersinia pestis bv. Antiqua (strain Antiqua).